Reading from the N-terminus, the 363-residue chain is NADH-quinone oxidoreductase subunit H (363 aa).

A run of 9 helical transmembrane segments spans residues 62-82 (GPMYVGMGLFQAFADVFKLLF), 94-114 (AIFVIAPLLTLAPSFAAWAVV), 127-147 (VGLLYLLAMTSLGVYGIILAG), 166-186 (VVSYEIAMGFALVGVMIAAGS), 202-222 (FFDWFLIPLFPLFIVYWVSGV), 239-257 (IVAGHMVEYSGSVFALFFL), 264-286 (ILVSFLISIFFLGGWLSPIQGWV), 293-313 (LIDWVWNGGWPWLLFKVLFFA), and 339-359 (FIPLTIVWIAVTALMVFSGVI).

The protein belongs to the complex I subunit 1 family. NDH-1 is composed of 14 different subunits. Subunits NuoA, H, J, K, L, M, N constitute the membrane sector of the complex.

The protein localises to the cell inner membrane. It carries out the reaction a quinone + NADH + 5 H(+)(in) = a quinol + NAD(+) + 4 H(+)(out). In terms of biological role, NDH-1 shuttles electrons from NADH, via FMN and iron-sulfur (Fe-S) centers, to quinones in the respiratory chain. The immediate electron acceptor for the enzyme in this species is believed to be ubiquinone. Couples the redox reaction to proton translocation (for every two electrons transferred, four hydrogen ions are translocated across the cytoplasmic membrane), and thus conserves the redox energy in a proton gradient. This subunit may bind ubiquinone. The sequence is that of NADH-quinone oxidoreductase subunit H from Xylella fastidiosa (strain 9a5c).